We begin with the raw amino-acid sequence, 335 residues long: Peflin (335 aa).

The segment covering 23 to 37 (AMEETRREFEKEKQR) has biased composition (basic and acidic residues). The interval 23-92 (AMEETRREFE…SPRHTKTPVD (70 aa)) is disordered. Positions 43-53 (VTQAQTPNTRV) are enriched in polar residues. 5 consecutive EF-hand domains span residues 144 to 192 (KVAP…DDNS), 198 to 223 (SVDA…IALY), 224 to 259 (KRVK…LGYL), 260 to 300 (IPFE…LMRL), and 301 to 332 (TKLF…LGRF). Residues D170, R176, and E181 each coordinate Ca(2+). Ca(2+) is bound by residues D237, N239, S241, T243, and E248.

As to quaternary structure, homodimer.

It is found in the cytoplasm. The protein localises to the nucleus. It localises to the bud tip. Its subcellular location is the bud neck. Its function is as follows. Calcium-binding protein that is required for polar bud growth and cell wall abscission. Can also bind zinc ions. This Saccharomyces cerevisiae (strain ATCC 204508 / S288c) (Baker's yeast) protein is Peflin (PEF1).